Reading from the N-terminus, the 257-residue chain is Putative cysteine-rich repeat secretory protein 28 (257 aa).

A signal peptide spans 1–26; sequence MFSTFGSVPILTVVAIQLFLIRNVLS. Gnk2-homologous domains are found at residues 32–136 and 142–254; these read AYLH…TVDS and YEND…LYPF.

Belongs to the cysteine-rich repeat secretory protein family.

It is found in the secreted. The sequence is that of Putative cysteine-rich repeat secretory protein 28 (CRRSP28) from Arabidopsis thaliana (Mouse-ear cress).